Here is a 68-residue protein sequence, read N- to C-terminus: Large ribosomal subunit protein bL33c (68 aa).

The protein belongs to the bacterial ribosomal protein bL33 family.

It is found in the plastid. Its subcellular location is the chloroplast. In Amborella trichopoda, this protein is Large ribosomal subunit protein bL33c.